We begin with the raw amino-acid sequence, 318 residues long: BES1/BZR1 homolog protein 2 (318 aa).

Gly residues predominate over residues 1-13 (MAAGGGGGGGGSS). Disordered regions lie at residues 1-34 (MAAGGGGGGGGSSSGRTPTWKERENNKKRERRRR), 84-133 (FKPP…PSPS), 166-195 (NSAPVTPPLSSPTSRGSKRKLTSEQLPNGG), and 209-231 (APSSPTRRAGHQTPPTIPECDES). The segment at 16–97 (RTPTWKEREN…ASDISGTPTN (82 aa)) is required for DNA-binding. Residues 91–101 (ISGTPTNFSTN) show a composition bias toward polar residues. Residues 102 to 133 (SSIQPSPQSSAFPSPAPSYHGSPVSSSFPSPS) are compositionally biased toward low complexity.

This sequence belongs to the BZR/LAT61 family. Post-translationally, phosphorylated. Phosphorylation increases protein degradation.

In Arabidopsis thaliana (Mouse-ear cress), this protein is BES1/BZR1 homolog protein 2 (BEH2).